A 321-amino-acid chain; its full sequence is Glucokinase (321 aa).

8–13 (ADIGGT) serves as a coordination point for ATP.

It belongs to the bacterial glucokinase family.

The protein resides in the cytoplasm. It catalyses the reaction D-glucose + ATP = D-glucose 6-phosphate + ADP + H(+). The chain is Glucokinase from Photorhabdus laumondii subsp. laumondii (strain DSM 15139 / CIP 105565 / TT01) (Photorhabdus luminescens subsp. laumondii).